Reading from the N-terminus, the 154-residue chain is MEILVVAVGILVDRLTKIWALDKLKKVQDIPIIKNFFDLTYVENRGAAWGIFSGKTLVLSAVTLLVLSAIIVYMIKYRPKSKLARISLSLVISGALGNLYDRVFYKYVVDLFSLHYKDIYYYPVFNVADICVVVGTIMIAIFIVLKDDKKDGKV.

2 consecutive transmembrane segments (helical) span residues 57-77 (LVLS…MIKY) and 86-103 (ISLS…YDRV). Active-site residues include D110 and D129. The chain crosses the membrane as a helical span at residues 124 to 144 (VFNVADICVVVGTIMIAIFIV).

The protein belongs to the peptidase A8 family.

The protein resides in the cell membrane. It carries out the reaction Release of signal peptides from bacterial membrane prolipoproteins. Hydrolyzes -Xaa-Yaa-Zaa-|-(S,diacylglyceryl)Cys-, in which Xaa is hydrophobic (preferably Leu), and Yaa (Ala or Ser) and Zaa (Gly or Ala) have small, neutral side chains.. It functions in the pathway protein modification; lipoprotein biosynthesis (signal peptide cleavage). This protein specifically catalyzes the removal of signal peptides from prolipoproteins. The sequence is that of Lipoprotein signal peptidase from Clostridium acetobutylicum (strain ATCC 824 / DSM 792 / JCM 1419 / IAM 19013 / LMG 5710 / NBRC 13948 / NRRL B-527 / VKM B-1787 / 2291 / W).